A 484-amino-acid chain; its full sequence is mRNA decay activator protein ZFP36L2 (484 aa).

Phosphoserine is present on residues Ser57 and Ser127. The interval 100–152 (YGQLKEPSGGSGTALVTKESKFRDRSFSENGERSQHLLHLQQQQKGGSGSQIN) is disordered. Positions 117 to 134 (KESKFRDRSFSENGERSQ) are enriched in basic and acidic residues. The short motif at 155-160 (RYKTEL) is the RNA-binding element. 2 consecutive C3H1-type zinc fingers follow at residues 155–183 (RYKT…HGFH) and 193–221 (KYKT…HNAD). The RNA-binding stretch occupies residues 172–213 (YGEKCQFAHGFHELRSLTRHPKYKTELCRTFHTIGFCPYGPR). Disordered regions lie at residues 261–304 (SLSF…SCSS) and 395–484 (QQGL…ISDD). Residues 401–418 (PAPPPAQPPAAPAPPSPP) show a composition bias toward pro residues. Over residues 449–468 (YLSGSLSSGSLSGSESPSLD) the composition is skewed to low complexity. Ser480 and Ser482 each carry phosphoserine; by RPS6KA1.

Associates with the cytoplasmic CCR4-NOT deadenylase to trigger ARE-containing mRNA deadenylation and decay processes. Interacts with CNOT7; this interaction is inhibited in response to phorbol 12-myristate 13-acetate (PMA) treatment in a p38 MAPK-dependent manner. Interacts with CNOT6L. Phosphorylated by RPS6KA1 at Ser-480 and Ser-482 upon phorbol 12-myristate 13-acetate (PMA) treatment; this phosphorylation results in dissociation of the CCR4-NOT-deadenylase complex and induces p38 MAPK-mediated stabilization of the low-density lipoprotein (LDL) receptor (LDLR) mRNA. Phosphorylation occurs during early preadipocyte differentiation. In terms of tissue distribution, expressed in preadipocytes and adipocytes (at protein level). Expressed at highest level in lymphoid tissues such as thymus, spleen, lung, uterus, ovary, small and large intestine, mammary gland, fat and bone marrow. Expressed at intermediate level in kidney, heart, adrenal, eye and fetal liver. Weakly expressed in brain, skeletal muscle and liver. Expressed through B lymphocyte development. Expressed in superior cervical ganglion (SCG) and dorsal root ganglion (DRG). Expressed in embryonic stem cells (ESCs). Expressed in oocytes.

The protein resides in the nucleus. Its subcellular location is the cytoplasm. Functionally, zinc-finger RNA-binding protein that destabilizes several cytoplasmic AU-rich element (ARE)-containing mRNA transcripts by promoting their poly(A) tail removal or deadenylation, and hence provide a mechanism for attenuating protein synthesis. Acts as a 3'-untranslated region (UTR) ARE mRNA-binding adapter protein to communicate signaling events to the mRNA decay machinery. Functions by recruiting the CCR4-NOT deadenylase complex and probably other components of the cytoplasmic RNA decay machinery to the bound ARE-containing mRNAs, and hence promotes ARE-mediated mRNA deadenylation and decay processes. Binds to 3'-UTR ARE of numerous mRNAs. Promotes ARE-containing mRNA decay of the low-density lipoprotein (LDL) receptor (LDLR) mRNA in response to phorbol 12-myristate 13-acetate (PMA) treatment in a p38 MAPK-dependent manner. Positively regulates early adipogenesis by promoting ARE-mediated mRNA decay of immediate early genes (IEGs). Plays a role in mature peripheral neuron integrity by promoting ARE-containing mRNA decay of the transcriptional repressor REST mRNA. Plays a role in ovulation and oocyte meiotic maturation by promoting ARE-mediated mRNA decay of the luteinizing hormone receptor LHCGR mRNA. Acts as a negative regulator of erythroid cell differentiation: promotes glucocorticoid-induced self-renewal of erythroid cells by binding mRNAs that are induced or highly expressed during terminal erythroid differentiation and promotes their degradation, preventing erythroid cell differentiation. In association with ZFP36L1 maintains quiescence on developing B lymphocytes by promoting ARE-mediated decay of several mRNAs encoding cell cycle regulators that help B cells progress through the cell cycle, and hence ensuring accurate variable-diversity-joining (VDJ) recombination process and functional immune cell formation. Together with ZFP36L1 is also necessary for thymocyte development and prevention of T-cell acute lymphoblastic leukemia (T-ALL) transformation by promoting ARE-mediated mRNA decay of the oncogenic transcription factor NOTCH1 mRNA. The polypeptide is mRNA decay activator protein ZFP36L2 (Mus musculus (Mouse)).